A 187-amino-acid chain; its full sequence is uncharacterized protein (187 aa).

The next 4 helical transmembrane spans lie at 29–50 (IFID…VYWI), 70–92 (FVIG…INAY), 128–147 (IFFA…SVLR), and 154–176 (LALV…ISYL).

Its subcellular location is the cell membrane. This is an uncharacterized protein from Archaeoglobus fulgidus (strain ATCC 49558 / DSM 4304 / JCM 9628 / NBRC 100126 / VC-16).